We begin with the raw amino-acid sequence, 307 residues long: tRNA pseudouridine synthase B (307 aa).

Asp38 (nucleophile) is an active-site residue.

Belongs to the pseudouridine synthase TruB family. Type 1 subfamily.

The enzyme catalyses uridine(55) in tRNA = pseudouridine(55) in tRNA. In terms of biological role, responsible for synthesis of pseudouridine from uracil-55 in the psi GC loop of transfer RNAs. The chain is tRNA pseudouridine synthase B from Bacillus cereus (strain ATCC 14579 / DSM 31 / CCUG 7414 / JCM 2152 / NBRC 15305 / NCIMB 9373 / NCTC 2599 / NRRL B-3711).